Consider the following 194-residue polypeptide: Cell division protein SepF (194 aa).

2 disordered regions span residues 35–54 and 159–194; these read DHRS…DSSP and SAPS…AGGL.

This sequence belongs to the SepF family. As to quaternary structure, homodimer. Interacts with FtsZ.

The protein localises to the cytoplasm. In terms of biological role, cell division protein that is part of the divisome complex and is recruited early to the Z-ring. Probably stimulates Z-ring formation, perhaps through the cross-linking of FtsZ protofilaments. Its function overlaps with FtsA. This chain is Cell division protein SepF, found in Prochlorococcus marinus (strain MIT 9313).